A 290-amino-acid chain; its full sequence is UPF0761 membrane protein YihY (290 aa).

6 helical membrane passes run 44-64 (LLSL…FPMF), 104-124 (VGAC…DSAL), 140-160 (FAVY…SLAI), 183-203 (IFPL…VPTI), 210-230 (AIVG…GFAL), and 244-264 (VLAV…IVLL).

The protein belongs to the UPF0761 family.

Its subcellular location is the cell inner membrane. In Shigella sonnei (strain Ss046), this protein is UPF0761 membrane protein YihY.